A 117-amino-acid chain; its full sequence is Immunoglobulin lambda variable 10-54 (117 aa).

The first 21 residues, 1-21 (MPWALLLLTLLTHSAVSVVQA), serve as a signal peptide directing secretion. The interval 20–43 (QAGLTQPPSVSKGLRQTATLTCTG) is framework-1. The 96-residue stretch at 22–117 (GLTQPPSVSK…CSALDSSLSA (96 aa)) folds into the Ig-like domain. Cys41 and Cys108 are disulfide-bonded. Residues 44–52 (NSNIVGNQG) are complementarity-determining-1. A framework-2 region spans residues 53 to 69 (AAWLQQHQGHPPKLLSY). The tract at residues 70 to 72 (RNN) is complementarity-determining-2. A framework-3 region spans residues 73–108 (NRPSGISERFSASRSGNTASLTITGLQPEDEADYYC). A complementarity-determining-3 region spans residues 109-117 (SALDSSLSA).

Immunoglobulins are composed of two identical heavy chains and two identical light chains; disulfide-linked.

It is found in the secreted. Its subcellular location is the cell membrane. Functionally, v region of the variable domain of immunoglobulin light chains that participates in the antigen recognition. Immunoglobulins, also known as antibodies, are membrane-bound or secreted glycoproteins produced by B lymphocytes. In the recognition phase of humoral immunity, the membrane-bound immunoglobulins serve as receptors which, upon binding of a specific antigen, trigger the clonal expansion and differentiation of B lymphocytes into immunoglobulins-secreting plasma cells. Secreted immunoglobulins mediate the effector phase of humoral immunity, which results in the elimination of bound antigens. The antigen binding site is formed by the variable domain of one heavy chain, together with that of its associated light chain. Thus, each immunoglobulin has two antigen binding sites with remarkable affinity for a particular antigen. The variable domains are assembled by a process called V-(D)-J rearrangement and can then be subjected to somatic hypermutations which, after exposure to antigen and selection, allow affinity maturation for a particular antigen. This Homo sapiens (Human) protein is Immunoglobulin lambda variable 10-54.